The sequence spans 62 residues: Photosystem II reaction center X protein (62 aa).

The chain crosses the membrane as a helical span at residues 26–46 (IASFFAAALLIVIPAAAFLIF).

This sequence belongs to the PsbX family. Type 2 subfamily. In terms of assembly, PSII consists of a core antenna complex that captures photons, and an electron transfer chain that converts photonic excitation into a charge separation. PSII forms dimeric complexes.

Its subcellular location is the cellular thylakoid membrane. In terms of biological role, involved in the binding and/or turnover of quinones at the Q(B) site of Photosystem II. This Prochlorococcus marinus subsp. pastoris (strain CCMP1986 / NIES-2087 / MED4) protein is Photosystem II reaction center X protein.